A 31-amino-acid polypeptide reads, in one-letter code: Cytochrome b6-f complex subunit 6 (31 aa).

Residues Ile4–Gly24 form a helical membrane-spanning segment.

Belongs to the PetL family. In terms of assembly, the 4 large subunits of the cytochrome b6-f complex are cytochrome b6, subunit IV (17 kDa polypeptide, PetD), cytochrome f and the Rieske protein, while the 4 small subunits are PetG, PetL, PetM and PetN. The complex functions as a dimer.

It localises to the plastid. Its subcellular location is the chloroplast thylakoid membrane. Its function is as follows. Component of the cytochrome b6-f complex, which mediates electron transfer between photosystem II (PSII) and photosystem I (PSI), cyclic electron flow around PSI, and state transitions. PetL is important for photoautotrophic growth as well as for electron transfer efficiency and stability of the cytochrome b6-f complex. The protein is Cytochrome b6-f complex subunit 6 of Oryza sativa subsp. japonica (Rice).